The following is a 267-amino-acid chain: Methylglyoxal reductase DkgB (267 aa).

Catalysis depends on Tyr39, which acts as the Proton donor. Position 97 (His97) interacts with substrate. 179–231 (MTLAYGKALAEPVIKTIAEQHGATPAQVILSWAMQLGYGVIPSSTKAANLASN) provides a ligand contact to NADP(+).

Belongs to the aldo/keto reductase family. In terms of assembly, monomer.

The protein localises to the cytoplasm. The catalysed reaction is hydroxyacetone + NADP(+) = methylglyoxal + NADPH + H(+). Aldo-keto reductase that significantly contributes to cellular methylglyoxal detoxification by catalyzing the NADPH-dependent conversion of methylglyoxal to acetol. The polypeptide is Methylglyoxal reductase DkgB (Yersinia pestis).